We begin with the raw amino-acid sequence, 169 residues long: Gametocyte-specific factor 1-like (169 aa).

2 CHHC U11-48K-type zinc fingers span residues 6–33 and 40–67; these read LETCPYNPHHRIPLSRFQYHLASCRRKN and MASCKYNACHVVPIKKLEEHEAACVNKS. Cysteine 9, histidine 15, histidine 25, cysteine 29, cysteine 43, histidine 49, histidine 59, and cysteine 63 together coordinate Zn(2+). Disordered stretches follow at residues 67 to 103 and 131 to 169; these read STMEEEDSLSPLKVSLPNAGQKGNRNASPVSPRLPNP and SDTRESETDDHNPIPDCPRRRSSDRESEPPAEDTSLLKA. Over residues 131–158 the composition is skewed to basic and acidic residues; it reads SDTRESETDDHNPIPDCPRRRSSDRESE.

This sequence belongs to the UPF0224 (FAM112) family.

The protein is Gametocyte-specific factor 1-like (GTSF1L) of Bos taurus (Bovine).